The primary structure comprises 887 residues: DNA mismatch repair protein MutS (887 aa).

Residue 621-628 coordinates ATP; the sequence is GPNMGGKS. A disordered region spans residues 828 to 853; the sequence is AEPEPNKPAAAAKTKPASPQPDLFAS. Residues 834 to 848 are compositionally biased toward low complexity; that stretch reads KPAAAAKTKPASPQP.

It belongs to the DNA mismatch repair MutS family.

Functionally, this protein is involved in the repair of mismatches in DNA. It is possible that it carries out the mismatch recognition step. This protein has a weak ATPase activity. In Saccharophagus degradans (strain 2-40 / ATCC 43961 / DSM 17024), this protein is DNA mismatch repair protein MutS.